The primary structure comprises 287 residues: MSDVEETVDEYEEQEEAAVEEHEESVEEEAGGEARQGGGASAAEDGEEEEGREAEDGPVEESKPQAPGPFMPNLVPPKIPDGERVDFDDIHRKRMEKDLNELQTLIEAHFENRKKEEEELVSLKDRIEKRRAERAEQQRIRTEREKERQARLAEERARREEEESRRKAEDEARKKKALSNMMHFGGYIQKAQAERKSGKRQTEREKKKKILAERRKVLAIDHLNEDQLREKARELWQSIYDLEAEKFDLQEKFKQQKYEINVLRNRVNDNQKVSKTRGKAKVTGRWK.

Composition is skewed to acidic residues over residues 1–31 (MSDVEETVDEYEEQEEAAVEEHEESVEEEAG) and 44–59 (EDGEEEEGREAEDGPV). 2 disordered regions span residues 1–85 (MSDV…GERV) and 124–208 (KDRI…EKKK). N-acetylserine is present on S2. S2 carries the phosphoserine; by CK2 modification. Positions 66–79 (APGPFMPNLVPPKI) are enriched in pro residues. 2 stretches are compositionally biased toward basic and acidic residues: residues 124–173 (KDRI…DEAR) and 192–208 (QAERKSGKRQTEREKKK). A Phosphoserine; by PKC/PRKCA modification is found at S197. Residue T202 is modified to Phosphothreonine; by PKC/PRKCA and RAF1. The residue at position 283 (T283) is a Phosphothreonine; by PKC/PRKCA.

It belongs to the troponin T family. Post-translationally, phosphorylation at Thr-202 by PRKCA induces significant reduction in myofilament calcium sensitivity and actomyosin ATPase activity.

Functionally, troponin T is the tropomyosin-binding subunit of troponin, the thin filament regulatory complex which confers calcium-sensitivity to striated muscle actomyosin ATPase activity. The chain is Troponin T, cardiac muscle (TNNT2) from Ovis aries (Sheep).